Reading from the N-terminus, the 395-residue chain is Elongation factor Tu (395 aa).

One can recognise a tr-type G domain in the interval 10–204; sequence KEHANIGTIG…AVDDFIPTPE (195 aa). Residues 19–26 form a G1 region; that stretch reads GHVDHGKT. 19 to 26 is a GTP binding site; that stretch reads GHVDHGKT. Position 26 (Thr-26) interacts with Mg(2+). The interval 60-64 is G2; it reads GITIN. Residues 81–84 form a G3 region; the sequence is DCPG. GTP is bound by residues 81–85 and 136–139; these read DCPGH and NKVD. The G4 stretch occupies residues 136–139; the sequence is NKVD. Residues 174–176 form a G5 region; that stretch reads SAL.

It belongs to the TRAFAC class translation factor GTPase superfamily. Classic translation factor GTPase family. EF-Tu/EF-1A subfamily. In terms of assembly, monomer.

It is found in the cytoplasm. It carries out the reaction GTP + H2O = GDP + phosphate + H(+). Functionally, GTP hydrolase that promotes the GTP-dependent binding of aminoacyl-tRNA to the A-site of ribosomes during protein biosynthesis. This Staphylococcus saprophyticus subsp. saprophyticus (strain ATCC 15305 / DSM 20229 / NCIMB 8711 / NCTC 7292 / S-41) protein is Elongation factor Tu.